A 191-amino-acid polypeptide reads, in one-letter code: MFLIVGLGNPGSKYDNTRHNIGFEVIDNISNEYNIDINRQKFRGVYGEGFIANNKVILLKPTTYMNLSGDSVREVANFYKISNENIIVIYDDISLDIGRLRIREKGSAGGHNGIKSIIANLSTDVFPRIKVGVGQPNIDLVNYVLGKFSKEEKEVLKESIEVATNSVEEIIKQDVNSAMNKFNGFKANKSI.

Residue Tyr14 participates in tRNA binding. The active-site Proton acceptor is His19. TRNA contacts are provided by Tyr64, Asn66, and Asn112.

It belongs to the PTH family. As to quaternary structure, monomer.

The protein resides in the cytoplasm. The enzyme catalyses an N-acyl-L-alpha-aminoacyl-tRNA + H2O = an N-acyl-L-amino acid + a tRNA + H(+). In terms of biological role, hydrolyzes ribosome-free peptidyl-tRNAs (with 1 or more amino acids incorporated), which drop off the ribosome during protein synthesis, or as a result of ribosome stalling. Its function is as follows. Catalyzes the release of premature peptidyl moieties from peptidyl-tRNA molecules trapped in stalled 50S ribosomal subunits, and thus maintains levels of free tRNAs and 50S ribosomes. The sequence is that of Peptidyl-tRNA hydrolase from Clostridium botulinum (strain Eklund 17B / Type B).